A 369-amino-acid chain; its full sequence is Protein V (369 aa).

Disordered regions lie at residues 1 to 23 (MDQD…GGRE) and 54 to 320 (INTL…GHRR). Composition is skewed to basic and acidic residues over residues 7-20 (ISKE…EASG), 99-110 (AEAHARNVDKQN), 150-168 (GAED…RGED), and 175-193 (EEIR…RADN). A phosphoserine; by host mark is found at S249, S257, and S260. Residues H318, C337, C341, C353, C355, C358, C362, and C365 each contribute to the Zn(2+) site.

It belongs to the paramyxoviruses V protein family. In terms of assembly, interacts with host IFIH1/MDA5 and DHX58/LGP2. Interacts with host IRF3. Interacts with host RIGI regulatory protein (via CARDs domain) and host TRIM25 (via SPRY domain); these interactions prevent TRIM25-mediated ubiquitination of RIG-I and disrupts downstream RIG-I signaling.

It localises to the host cytoplasm. Functionally, plays an essential role in the inhibition of host immune response. Prevents the establishment of cellular antiviral state by blocking interferon-alpha/beta (IFN-alpha/beta) production and signaling pathway. Interacts with host IFIH1/MDA5 and DHX58/LGP2 to inhibit the transduction pathway involved in the activation of IFN-beta promoter, thus protecting the virus against cell antiviral state. Also interacts with and inhibits host IRF3. Blocks the type I interferon signaling pathway by disrupting the RIG-I signaling pathway. In Cavia cutleri (Guinea pig), this protein is Protein V (P/V/C).